A 303-amino-acid polypeptide reads, in one-letter code: Aspartate carbamoyltransferase catalytic subunit (303 aa).

2 residues coordinate carbamoyl phosphate: arginine 48 and threonine 49. Lysine 76 is an L-aspartate binding site. Carbamoyl phosphate-binding residues include arginine 98, histidine 129, and glutamine 132. Positions 162 and 214 each coordinate L-aspartate. Residues alanine 257 and proline 258 each coordinate carbamoyl phosphate.

The protein belongs to the aspartate/ornithine carbamoyltransferase superfamily. ATCase family. Heterododecamer (2C3:3R2) of six catalytic PyrB chains organized as two trimers (C3), and six regulatory PyrI chains organized as three dimers (R2).

It carries out the reaction carbamoyl phosphate + L-aspartate = N-carbamoyl-L-aspartate + phosphate + H(+). Its pathway is pyrimidine metabolism; UMP biosynthesis via de novo pathway; (S)-dihydroorotate from bicarbonate: step 2/3. In terms of biological role, catalyzes the condensation of carbamoyl phosphate and aspartate to form carbamoyl aspartate and inorganic phosphate, the committed step in the de novo pyrimidine nucleotide biosynthesis pathway. This is Aspartate carbamoyltransferase catalytic subunit from Leuconostoc citreum (strain KM20).